The primary structure comprises 302 residues: Proteasome subunit beta (302 aa).

The segment covering 1–10 has biased composition (basic and acidic residues); sequence MAGRVREVSH. Residues 1–21 are disordered; it reads MAGRVREVSHSSDQSGRLPAA. Positions 1–67 are cleaved as a propeptide — removed in mature form; by autocatalysis; that stretch reads MAGRVREVSH…GPGAGEPPHA (67 aa). The Nucleophile role is filled by T68. Positions 283–302 are disordered; it reads RRGNPGGNPGISAVHGDGGN.

Belongs to the peptidase T1B family. In terms of assembly, the 20S proteasome core is composed of 14 alpha and 14 beta subunits that assemble into four stacked heptameric rings, resulting in a barrel-shaped structure. The two inner rings, each composed of seven catalytic beta subunits, are sandwiched by two outer rings, each composed of seven alpha subunits. The catalytic chamber with the active sites is on the inside of the barrel. Has a gated structure, the ends of the cylinder being occluded by the N-termini of the alpha-subunits. Is capped by the proteasome-associated ATPase, ARC.

The protein resides in the cytoplasm. It carries out the reaction Cleavage of peptide bonds with very broad specificity.. It participates in protein degradation; proteasomal Pup-dependent pathway. With respect to regulation, the formation of the proteasomal ATPase ARC-20S proteasome complex, likely via the docking of the C-termini of ARC into the intersubunit pockets in the alpha-rings, may trigger opening of the gate for substrate entry. Interconversion between the open-gate and close-gate conformations leads to a dynamic regulation of the 20S proteasome proteolysis activity. In terms of biological role, component of the proteasome core, a large protease complex with broad specificity involved in protein degradation. This Kineococcus radiotolerans (strain ATCC BAA-149 / DSM 14245 / SRS30216) protein is Proteasome subunit beta.